The primary structure comprises 218 residues: Cytochrome b6 (218 aa).

A helical membrane pass occupies residues 35–55; the sequence is IFYCLGGITLVCFLIQFATGF. Cys-38 provides a ligand contact to heme c. His-89 and His-103 together coordinate heme b. The next 3 helical transmembrane spans lie at 93–113, 119–139, and 189–209; these read ASMMVLMLILHVFRVYLTGGF, LTWVTGVVMAVITVAFGVTGY, and LHTFVLPWTLAVFMLMHFLMI. Residues His-190 and His-205 each coordinate heme b.

This sequence belongs to the cytochrome b family. PetB subfamily. As to quaternary structure, the 4 large subunits of the cytochrome b6-f complex are cytochrome b6, subunit IV (17 kDa polypeptide, PetD), cytochrome f and the Rieske protein, while the 4 small subunits are PetG, PetL, PetM and PetN. The complex functions as a dimer. Heme b is required as a cofactor. Requires heme c as cofactor.

The protein localises to the cellular thylakoid membrane. Functionally, component of the cytochrome b6-f complex, which mediates electron transfer between photosystem II (PSII) and photosystem I (PSI), cyclic electron flow around PSI, and state transitions. This is Cytochrome b6 from Prochlorococcus marinus (strain MIT 9211).